The sequence spans 310 residues: Methionyl-tRNA formyltransferase (310 aa).

109-112 (SLLP) serves as a coordination point for (6S)-5,6,7,8-tetrahydrofolate.

The protein belongs to the Fmt family.

The catalysed reaction is L-methionyl-tRNA(fMet) + (6R)-10-formyltetrahydrofolate = N-formyl-L-methionyl-tRNA(fMet) + (6S)-5,6,7,8-tetrahydrofolate + H(+). Attaches a formyl group to the free amino group of methionyl-tRNA(fMet). The formyl group appears to play a dual role in the initiator identity of N-formylmethionyl-tRNA by promoting its recognition by IF2 and preventing the misappropriation of this tRNA by the elongation apparatus. In Chloroflexus aurantiacus (strain ATCC 29366 / DSM 635 / J-10-fl), this protein is Methionyl-tRNA formyltransferase.